The sequence spans 184 residues: NADH-quinone oxidoreductase subunit B (184 aa).

Cys63, Cys64, Cys128, and Cys158 together coordinate [4Fe-4S] cluster.

Belongs to the complex I 20 kDa subunit family. NDH-1 is composed of 14 different subunits. Subunits NuoB, C, D, E, F, and G constitute the peripheral sector of the complex. The cofactor is [4Fe-4S] cluster.

Its subcellular location is the cell inner membrane. It carries out the reaction a quinone + NADH + 5 H(+)(in) = a quinol + NAD(+) + 4 H(+)(out). In terms of biological role, NDH-1 shuttles electrons from NADH, via FMN and iron-sulfur (Fe-S) centers, to quinones in the respiratory chain. The immediate electron acceptor for the enzyme in this species is believed to be ubiquinone. Couples the redox reaction to proton translocation (for every two electrons transferred, four hydrogen ions are translocated across the cytoplasmic membrane), and thus conserves the redox energy in a proton gradient. This Xylella fastidiosa (strain M23) protein is NADH-quinone oxidoreductase subunit B.